The chain runs to 737 residues: Lysyl oxidase homolog 2A (737 aa).

A signal peptide spans 1 to 18 (MAVSSALCIFSLLVLAQA). 4 consecutive SRCR domains span residues 29 to 130 (LRLA…VICN), 159 to 270 (IRPI…VSCV), 294 to 393 (VRLR…VRCN), and 403 to 512 (IRLS…VSCS). Disulfide bonds link Cys55–Cys119, Cys68–Cys129, Cys99–Cys109, Cys188–Cys259, Cys201–Cys269, Cys235–Cys245, Cys319–Cys382, Cys332–Cys392, and Cys363–Cys373. N-linked (GlcNAc...) asparagine glycosylation occurs at Asn256. N-linked (GlcNAc...) asparagine glycosylation occurs at Asn423. 3 disulfide bridges follow: Cys432–Cys498, Cys445–Cys511, and Cys479–Cys489. The interval 516–718 (PDLVLNAQLV…WTYSCHIGGS (203 aa)) is lysyl-oxidase like. Positions 517 and 518 each coordinate Ca(2+). 4 disulfides stabilise this stretch: Cys541–Cys592, Cys547–Cys662, Cys624–Cys640, and Cys630–Cys652. Cu cation is bound by residues His593, His595, and His597. A glycan (N-linked (GlcNAc...) asparagine) is linked at Asn611. The segment at residues 620 to 656 (KASFCLEDTHCDEGISKRYHCANFGEQGITVGCWDTY) is a cross-link (lysine tyrosylquinone (Lys-Tyr)). At Tyr656 the chain carries 2',4',5'-topaquinone. Glu689, Asp691, Asn694, and Asn695 together coordinate Ca(2+). The cysteines at positions 699 and 713 are disulfide-linked.

It belongs to the lysyl oxidase family. The cofactor is Cu cation. It depends on lysine tyrosylquinone residue as a cofactor. Post-translationally, the lysine tyrosylquinone cross-link (LTQ) is generated by condensation of the epsilon-amino group of a lysine with a topaquinone produced by oxidation of tyrosine.

It localises to the secreted. Its subcellular location is the extracellular space. The protein localises to the extracellular matrix. It is found in the basement membrane. The protein resides in the nucleus. It localises to the chromosome. Its subcellular location is the endoplasmic reticulum. It carries out the reaction L-lysyl-[protein] + O2 + H2O = (S)-2-amino-6-oxohexanoyl-[protein] + H2O2 + NH4(+). Functionally, mediates the post-translational oxidative deamination of lysine residues on target proteins leading to the formation of deaminated lysine (allysine). Acts as a transcription corepressor and specifically mediates deamination of trimethylated 'Lys-4' of histone H3 (H3K4me3), a specific tag for epigenetic transcriptional activation. Shows no activity against histone H3 when it is trimethylated on 'Lys-9' (H3K9me3) or 'Lys-27' (H3K27me3) or when 'Lys-4' is monomethylated (H3K4me1) or dimethylated (H3K4me2). Also mediates deamination of methylated TAF10, a member of the transcription factor IID (TFIID) complex, which induces release of TAF10 from promoters, leading to inhibition of TFIID-dependent transcription. LOXL2-mediated deamination of TAF10 results in transcriptional repression of genes required for embryonic stem cell pluripotency. Involved in epithelial to mesenchymal transition (EMT) and participates in repression of E-cadherin, probably by mediating deamination of histone H3. When secreted into the extracellular matrix, promotes cross-linking of extracellular matrix proteins by mediating oxidative deamination of peptidyl lysine residues in precursors to fibrous collagen and elastin. Acts as a regulator of sprouting angiogenesis, probably via collagen IV scaffolding. Acts as a regulator of chondrocyte differentiation, probably by regulating expression of factors that control chondrocyte differentiation. Required with loxl2b for correct expression of Sox2 and for neural differentiation. The polypeptide is Lysyl oxidase homolog 2A (loxl2a) (Danio rerio (Zebrafish)).